The sequence spans 156 residues: MTNDIYFMTLAIEEAKKAAQLGEVPIGAIITKDDEVIARAHNLRETLQQPTAHAEHIAIERAAKVLGSWRLEGCTLYVTLEPCVMCAGTIVMSRIPRVVYGADDPKGGCSGSLMNLLQQSNFNHRAIVDKGVLKEACSTLLTTFFKNLRANKKSTN.

The 119-residue stretch at 2-120 (TNDIYFMTLA…GSLMNLLQQS (119 aa)) folds into the CMP/dCMP-type deaminase domain. H53 serves as a coordination point for Zn(2+). The Proton donor role is filled by E55. The Zn(2+) site is built by C83 and C86.

It belongs to the cytidine and deoxycytidylate deaminase family. As to quaternary structure, homodimer. Zn(2+) is required as a cofactor.

It carries out the reaction adenosine(34) in tRNA + H2O + H(+) = inosine(34) in tRNA + NH4(+). In terms of biological role, catalyzes the deamination of adenosine to inosine at the wobble position 34 of tRNA(Arg2). This chain is tRNA-specific adenosine deaminase, found in Staphylococcus aureus (strain Mu50 / ATCC 700699).